The following is a 148-amino-acid chain: UPF0260 protein Maqu_1608 (148 aa).

Belongs to the UPF0260 family.

This is UPF0260 protein Maqu_1608 from Marinobacter nauticus (strain ATCC 700491 / DSM 11845 / VT8) (Marinobacter aquaeolei).